Consider the following 260-residue polypeptide: 1-(5-phosphoribosyl)-5-[(5-phosphoribosylamino)methylideneamino] imidazole-4-carboxamide isomerase (260 aa).

Catalysis depends on D8, which acts as the Proton acceptor. D130 serves as the catalytic Proton donor.

It belongs to the HisA/HisF family.

The protein resides in the cytoplasm. The catalysed reaction is 1-(5-phospho-beta-D-ribosyl)-5-[(5-phospho-beta-D-ribosylamino)methylideneamino]imidazole-4-carboxamide = 5-[(5-phospho-1-deoxy-D-ribulos-1-ylimino)methylamino]-1-(5-phospho-beta-D-ribosyl)imidazole-4-carboxamide. It participates in amino-acid biosynthesis; L-histidine biosynthesis; L-histidine from 5-phospho-alpha-D-ribose 1-diphosphate: step 4/9. The chain is 1-(5-phosphoribosyl)-5-[(5-phosphoribosylamino)methylideneamino] imidazole-4-carboxamide isomerase from Chlorobaculum tepidum (strain ATCC 49652 / DSM 12025 / NBRC 103806 / TLS) (Chlorobium tepidum).